We begin with the raw amino-acid sequence, 161 residues long: uncharacterized protein (161 aa).

In terms of assembly, interacts with ribosomes.

This is an uncharacterized protein from Saccharomyces cerevisiae (strain ATCC 204508 / S288c) (Baker's yeast).